We begin with the raw amino-acid sequence, 270 residues long: Glucosamine-6-phosphate deaminase (270 aa).

The active-site Proton acceptor; for enolization step is the Asp-72. Asp-141 functions as the For ring-opening step in the catalytic mechanism. His-143 acts as the Proton acceptor; for ring-opening step in catalysis. Glu-148 functions as the For ring-opening step in the catalytic mechanism.

Belongs to the glucosamine/galactosamine-6-phosphate isomerase family. NagB subfamily.

It catalyses the reaction alpha-D-glucosamine 6-phosphate + H2O = beta-D-fructose 6-phosphate + NH4(+). The protein operates within amino-sugar metabolism; N-acetylneuraminate degradation; D-fructose 6-phosphate from N-acetylneuraminate: step 5/5. Allosterically activated by N-acetylglucosamine 6-phosphate (GlcNAc6P). In terms of biological role, catalyzes the reversible isomerization-deamination of glucosamine 6-phosphate (GlcN6P) to form fructose 6-phosphate (Fru6P) and ammonium ion. This is Glucosamine-6-phosphate deaminase from Treponema denticola (strain ATCC 35405 / DSM 14222 / CIP 103919 / JCM 8153 / KCTC 15104).